A 497-amino-acid polypeptide reads, in one-letter code: NAD(P)H-quinone oxidoreductase subunit 2, chloroplastic (497 aa).

A run of 14 helical transmembrane segments spans residues 13–33 (VILP…LDLI), 37–57 (SAWL…ALVF), 76–96 (FTIS…LIST), 103–123 (GMGL…GLFL), 129–149 (LVTV…LVGY), 164–184 (LLMG…LYGL), 206–226 (IAVW…LSAF), 240–260 (PTPV…ALAT), 274–294 (WHVL…LIAA), 311–331 (AGYL…GMIT), 332–352 (YMVT…LFGL), 373–393 (AFCL…AGFF), 406–426 (GLYL…YYYL), and 462–482 (VGIA…NPII).

It belongs to the complex I subunit 2 family. As to quaternary structure, NDH is composed of at least 16 different subunits, 5 of which are encoded in the nucleus.

The protein localises to the plastid. The protein resides in the chloroplast thylakoid membrane. It carries out the reaction a plastoquinone + NADH + (n+1) H(+)(in) = a plastoquinol + NAD(+) + n H(+)(out). The enzyme catalyses a plastoquinone + NADPH + (n+1) H(+)(in) = a plastoquinol + NADP(+) + n H(+)(out). In terms of biological role, NDH shuttles electrons from NAD(P)H:plastoquinone, via FMN and iron-sulfur (Fe-S) centers, to quinones in the photosynthetic chain and possibly in a chloroplast respiratory chain. The immediate electron acceptor for the enzyme in this species is believed to be plastoquinone. Couples the redox reaction to proton translocation, and thus conserves the redox energy in a proton gradient. This chain is NAD(P)H-quinone oxidoreductase subunit 2, chloroplastic, found in Zygnema circumcarinatum (Green alga).